A 211-amino-acid polypeptide reads, in one-letter code: ATP phosphoribosyltransferase (211 aa).

This sequence belongs to the ATP phosphoribosyltransferase family. Short subfamily. Heteromultimer composed of HisG and HisZ subunits.

The protein resides in the cytoplasm. The catalysed reaction is 1-(5-phospho-beta-D-ribosyl)-ATP + diphosphate = 5-phospho-alpha-D-ribose 1-diphosphate + ATP. Its pathway is amino-acid biosynthesis; L-histidine biosynthesis; L-histidine from 5-phospho-alpha-D-ribose 1-diphosphate: step 1/9. In terms of biological role, catalyzes the condensation of ATP and 5-phosphoribose 1-diphosphate to form N'-(5'-phosphoribosyl)-ATP (PR-ATP). Has a crucial role in the pathway because the rate of histidine biosynthesis seems to be controlled primarily by regulation of HisG enzymatic activity. This chain is ATP phosphoribosyltransferase, found in Lacticaseibacillus paracasei (strain ATCC 334 / BCRC 17002 / CCUG 31169 / CIP 107868 / KCTC 3260 / NRRL B-441) (Lactobacillus paracasei).